Reading from the N-terminus, the 149-residue chain is SsrA-binding protein (149 aa).

It belongs to the SmpB family.

Its subcellular location is the cytoplasm. Required for rescue of stalled ribosomes mediated by trans-translation. Binds to transfer-messenger RNA (tmRNA), required for stable association of tmRNA with ribosomes. tmRNA and SmpB together mimic tRNA shape, replacing the anticodon stem-loop with SmpB. tmRNA is encoded by the ssrA gene; the 2 termini fold to resemble tRNA(Ala) and it encodes a 'tag peptide', a short internal open reading frame. During trans-translation Ala-aminoacylated tmRNA acts like a tRNA, entering the A-site of stalled ribosomes, displacing the stalled mRNA. The ribosome then switches to translate the ORF on the tmRNA; the nascent peptide is terminated with the 'tag peptide' encoded by the tmRNA and targeted for degradation. The ribosome is freed to recommence translation, which seems to be the essential function of trans-translation. In Carboxydothermus hydrogenoformans (strain ATCC BAA-161 / DSM 6008 / Z-2901), this protein is SsrA-binding protein.